The following is a 290-amino-acid chain: D-tagatose 3-epimerase (290 aa).

C66 contacts substrate. The Proton donor/acceptor role is filled by E152. Residue E152 participates in Mn(2+) binding. Substrate is bound by residues E158 and 185–188 (DTFH). D185 and H211 together coordinate Mn(2+). Residue R217 participates in substrate binding. The active-site Proton donor/acceptor is the E246. E246 is a binding site for Mn(2+).

Belongs to the hyi family. As to quaternary structure, homodimer. Mn(2+) serves as cofactor.

It catalyses the reaction keto-D-tagatose = keto-D-sorbose. It carries out the reaction D-allulose = keto-D-fructose. The catalysed reaction is D-ribulose = D-xylulose. Strongly inhibited (about 90% of the enzyme activity) by Ag(+), Hg(2+) and p-chloromercuribenzoic acid. Cu(2+) and Zn(2+) inhibit about 60% of the enzyme activity. Functionally, catalyzes the epimerization of various ketoses at the C(3) position. It is able to interconvert D-tagatose and D-ribulose to D-sorbose and D-xylulose, respectively. The enzyme is also able to accept other ketopentoses such as D-psicose with lower efficiency. The polypeptide is D-tagatose 3-epimerase (Pseudomonas cichorii).